A 252-amino-acid chain; its full sequence is 5'-nucleotidase SurE (252 aa).

Residues D8, D9, S39, and N91 each coordinate a divalent metal cation.

Belongs to the SurE nucleotidase family. It depends on a divalent metal cation as a cofactor.

It is found in the cytoplasm. It catalyses the reaction a ribonucleoside 5'-phosphate + H2O = a ribonucleoside + phosphate. In terms of biological role, nucleotidase that shows phosphatase activity on nucleoside 5'-monophosphates. This Geobacter metallireducens (strain ATCC 53774 / DSM 7210 / GS-15) protein is 5'-nucleotidase SurE.